We begin with the raw amino-acid sequence, 518 residues long: Beta-TrCP (518 aa).

Polar residues predominate over residues 1 to 12 (MEGFSCSLQPPT). Positions 1 to 24 (MEGFSCSLQPPTASEREDCNRDEP) are disordered. Positions 14 to 24 (SEREDCNRDEP) are enriched in basic and acidic residues. The F-box domain maps to 119 to 157 (DHIAENILSYLDAKSLCSAELVCKEWYRVTSDGMLWKKL). WD repeat units follow at residues 230 to 258 (ETSKGVYCLQYDDQKIVSGLRDNTIKIWD), 270 to 298 (GHTGSVLCLQYDERVIITGSSDSTVRVWD), 310 to 338 (HHCEAVLHLRFNNGMMVTCSKDRSIAVWD), 353 to 381 (GHRAAVNVVDFDDKYIVSASGDRTIKVWN), 393 to 421 (GHKRGIACLQYRDRLVVSGSSDNTIRLWD), 433 to 461 (GHEELVRCIRFDNKRIVSGAYDGKIKVWD), and 482 to 510 (EHSGRVFRLQFDEFQIVSSSHDDTILIWD).

As to quaternary structure, part of a SCF (SKP1-cullin-F-box) ubiquitin-protein ligase complex. Interacts with fbxo5.

In terms of biological role, substrate recognition component of a SCF (SKP1-CUL1-F-box protein) E3 ubiquitin-protein ligase complex which mediates the ubiquitination and subsequent proteasomal degradation of target proteins. Probably recognizes and binds to phosphorylated target proteins. May participate in Wnt signaling. This Xenopus laevis (African clawed frog) protein is Beta-TrCP (fbxw1).